The chain runs to 143 residues: uncharacterized protein (143 aa).

This is an uncharacterized protein from Homo sapiens (Human).